The primary structure comprises 297 residues: N-acetylneuraminate lyase (297 aa).

Residues Ser-47 and Thr-48 each contribute to the aceneuramate site. Tyr-137 serves as the catalytic Proton donor. The Schiff-base intermediate with substrate role is filled by Lys-165. Residues Thr-167, Gly-189, Asp-191, Glu-192, and Ser-208 each contribute to the aceneuramate site.

It belongs to the DapA family. NanA subfamily. Homotetramer.

The protein localises to the cytoplasm. It carries out the reaction aceneuramate = aldehydo-N-acetyl-D-mannosamine + pyruvate. It functions in the pathway amino-sugar metabolism; N-acetylneuraminate degradation; D-fructose 6-phosphate from N-acetylneuraminate: step 1/5. Its function is as follows. Catalyzes the reversible aldol cleavage of N-acetylneuraminic acid (sialic acid; Neu5Ac) to form pyruvate and N-acetylmannosamine (ManNAc) via a Schiff base intermediate. This Escherichia coli (strain SE11) protein is N-acetylneuraminate lyase.